The primary structure comprises 425 residues: Argininosuccinate synthase (425 aa).

Residues 7 to 15 (AYSGGLDTS) and A33 contribute to the ATP site. Y84 lines the L-citrulline pocket. Position 114 (G114) interacts with ATP. Residues T116, N120, and D121 each contribute to the L-aspartate site. N120 contributes to the L-citrulline binding site. The L-citrulline site is built by R124, S177, S186, E267, and Y279.

Belongs to the argininosuccinate synthase family. Type 1 subfamily. Homotetramer.

The protein localises to the cytoplasm. It catalyses the reaction L-citrulline + L-aspartate + ATP = 2-(N(omega)-L-arginino)succinate + AMP + diphosphate + H(+). The protein operates within amino-acid biosynthesis; L-arginine biosynthesis; L-arginine from L-ornithine and carbamoyl phosphate: step 2/3. This chain is Argininosuccinate synthase, found in Pseudothermotoga lettingae (strain ATCC BAA-301 / DSM 14385 / NBRC 107922 / TMO) (Thermotoga lettingae).